Consider the following 239-residue polypeptide: ATP-dependent dethiobiotin synthetase BioD (239 aa).

15–20 (EIGKTF) serves as a coordination point for ATP. A Mg(2+)-binding site is contributed by Thr-19. Residue Lys-40 is part of the active site. Residues Asp-57, 118 to 121 (EGVG), 178 to 179 (NH), and 211 to 213 (AHL) contribute to the ATP site. Mg(2+) is bound by residues Asp-57 and Glu-118.

Belongs to the dethiobiotin synthetase family. In terms of assembly, homodimer. Mg(2+) is required as a cofactor.

It localises to the cytoplasm. It carries out the reaction (7R,8S)-7,8-diammoniononanoate + CO2 + ATP = (4R,5S)-dethiobiotin + ADP + phosphate + 3 H(+). It participates in cofactor biosynthesis; biotin biosynthesis; biotin from 7,8-diaminononanoate: step 1/2. Its function is as follows. Catalyzes a mechanistically unusual reaction, the ATP-dependent insertion of CO2 between the N7 and N8 nitrogen atoms of 7,8-diaminopelargonic acid (DAPA, also called 7,8-diammoniononanoate) to form a ureido ring. This Burkholderia ambifaria (strain MC40-6) protein is ATP-dependent dethiobiotin synthetase BioD.